Consider the following 490-residue polypeptide: GTPase Der (490 aa).

EngA-type G domains are found at residues 3–166 and 203–376; these read PVVA…MEDL and IKLA…DSST. GTP contacts are provided by residues 9 to 16, 56 to 60, 118 to 121, 209 to 216, 256 to 260, and 321 to 324; these read GRPNVGKS, DTGGI, NKID, DTAGV, and NKWD. The KH-like domain maps to 377-461; that stretch reads RRVGTSMLTR…PIRIQFKEGE (85 aa).

This sequence belongs to the TRAFAC class TrmE-Era-EngA-EngB-Septin-like GTPase superfamily. EngA (Der) GTPase family. In terms of assembly, associates with the 50S ribosomal subunit.

In terms of biological role, GTPase that plays an essential role in the late steps of ribosome biogenesis. This chain is GTPase Der, found in Shigella boydii serotype 18 (strain CDC 3083-94 / BS512).